A 416-amino-acid polypeptide reads, in one-letter code: Serine/threonine-protein kinase 26 (416 aa).

Ala-2 is subject to N-acetylalanine. Ser-4 is subject to Phosphoserine. The Protein kinase domain maps to 24–274; that stretch reads FTKLERIGKG…AKELLKHKFI (251 aa). Residues 30–38 and Lys-53 contribute to the ATP site; that span reads IGKGSFGEV. Catalysis depends on Asp-144, which acts as the Proton acceptor. Thr-178 is subject to Phosphothreonine; by autocatalysis. The disordered stretch occupies residues 297 to 340; sequence EGHSDDESDSEGSDSESTSRENNTHPEWSFTTVRKKPDPKKVQN. 5 positions are modified to phosphoserine: Ser-300, Ser-304, Ser-306, Ser-309, and Ser-325. A phosphothreonine mark is found at Thr-327 and Thr-328.

This sequence belongs to the protein kinase superfamily. STE Ser/Thr protein kinase family. STE20 subfamily. In terms of assembly, homodimer. Interacts with PDCD10. Interacts with GOLGA2. Interacts with CTTNBP2NL. Interacts with RIPOR1 (via C-terminus); this interaction occurs in a PDCD10-dependent and Rho-independent manner. Interacts with PDCD10; this interaction is required for the association of STK26 with RIPOR1. Part of the core of STRIPAK complexes composed of PP2A catalytic and scaffolding subunits, the striatins (PP2A regulatory subunits), the striatin-associated proteins MOB4, STRIP1 and STRIP2, PDCD10 and members of the STE20 kinases, such as STK24 and STK26. The cofactor is Mg(2+).

The protein resides in the cytoplasm. It is found in the golgi apparatus. The catalysed reaction is L-seryl-[protein] + ATP = O-phospho-L-seryl-[protein] + ADP + H(+). The enzyme catalyses L-threonyl-[protein] + ATP = O-phospho-L-threonyl-[protein] + ADP + H(+). Interaction with Golgi matrix protein GOLGA2 leads to autophosphorylation on Thr-178, possibly as a consequence of stabilization of dimer formation. May also be activated by C-terminal cleavage. Its function is as follows. Serine/threonine-protein kinase that acts as a mediator of cell growth. Modulates apoptosis. In association with STK24 negatively regulates Golgi reorientation in polarized cell migration upon RHO activation. Phosphorylates ATG4B at 'Ser-383', thereby increasing autophagic flux. Part of the striatin-interacting phosphatase and kinase (STRIPAK) complexes. STRIPAK complexes have critical roles in protein (de)phosphorylation and are regulators of multiple signaling pathways including Hippo, MAPK, nuclear receptor and cytoskeleton remodeling. Different types of STRIPAK complexes are involved in a variety of biological processes such as cell growth, differentiation, apoptosis, metabolism and immune regulation. The chain is Serine/threonine-protein kinase 26 from Homo sapiens (Human).